Reading from the N-terminus, the 810-residue chain is Glycerol-3-phosphate acyltransferase (810 aa).

An HXXXXD motif motif is present at residues 305-310; that stretch reads CHRSHI.

This sequence belongs to the GPAT/DAPAT family.

It is found in the cell inner membrane. It carries out the reaction sn-glycerol 3-phosphate + an acyl-CoA = a 1-acyl-sn-glycero-3-phosphate + CoA. The protein operates within phospholipid metabolism; CDP-diacylglycerol biosynthesis; CDP-diacylglycerol from sn-glycerol 3-phosphate: step 1/3. The protein is Glycerol-3-phosphate acyltransferase of Haemophilus influenzae (strain PittEE).